The primary structure comprises 175 residues: Large ribosomal subunit protein bL17 (175 aa).

The disordered stretch occupies residues 124–175 (VKKSKPTAPAQAVATKPAVEETREAAAAQPQEPEVEISEVKDPAEECEAKAD). The segment covering 161–175 (SEVKDPAEECEAKAD) has biased composition (basic and acidic residues).

The protein belongs to the bacterial ribosomal protein bL17 family. Part of the 50S ribosomal subunit. Contacts protein L32.

The chain is Large ribosomal subunit protein bL17 from Geobacter sulfurreducens (strain ATCC 51573 / DSM 12127 / PCA).